Consider the following 734-residue polypeptide: Photosystem I P700 chlorophyll a apoprotein A2 (734 aa).

Helical transmembrane passes span 46–69, 135–158, 175–199, 273–291, 330–353, 369–395, 417–439, and 517–535; these read IFAS…FHVA, LYTG…LHLQ, LNHH…HVAI, IAHH…GHMY, LHFQ…QHMY, AALY…IFLI, AIIS…LYVH, and FLVH…LILV. Positions 559 and 568 each coordinate [4Fe-4S] cluster. The next 2 helical transmembrane spans lie at 575–596 and 643–665; these read AFYS…YWHW and LSVW…MFLI. Chlorophyll a contacts are provided by His-654, Met-662, and Tyr-670. Trp-671 contacts phylloquinone. Residues 707 to 727 form a helical membrane-spanning segment; sequence LVGLAHFSVGYIFTYAAFLIA.

It belongs to the PsaA/PsaB family. As to quaternary structure, the PsaA/B heterodimer binds the P700 chlorophyll special pair and subsequent electron acceptors. PSI consists of a core antenna complex that captures photons, and an electron transfer chain that converts photonic excitation into a charge separation. The eukaryotic PSI reaction center is composed of at least 11 subunits. P700 is a chlorophyll a/chlorophyll a' dimer, A0 is one or more chlorophyll a, A1 is one or both phylloquinones and FX is a shared 4Fe-4S iron-sulfur center. serves as cofactor.

Its subcellular location is the plastid. The protein resides in the chloroplast thylakoid membrane. It carries out the reaction reduced [plastocyanin] + hnu + oxidized [2Fe-2S]-[ferredoxin] = oxidized [plastocyanin] + reduced [2Fe-2S]-[ferredoxin]. Functionally, psaA and PsaB bind P700, the primary electron donor of photosystem I (PSI), as well as the electron acceptors A0, A1 and FX. PSI is a plastocyanin-ferredoxin oxidoreductase, converting photonic excitation into a charge separation, which transfers an electron from the donor P700 chlorophyll pair to the spectroscopically characterized acceptors A0, A1, FX, FA and FB in turn. Oxidized P700 is reduced on the lumenal side of the thylakoid membrane by plastocyanin. In Huperzia lucidula (Shining clubmoss), this protein is Photosystem I P700 chlorophyll a apoprotein A2.